The following is a 721-amino-acid chain: DNA ligase (721 aa).

NAD(+)-binding positions include aspartate 39 to aspartate 43, serine 89 to leucine 90, and glutamate 123. Residue lysine 125 is the N6-AMP-lysine intermediate of the active site. NAD(+) is bound by residues arginine 146, glutamate 186, lysine 302, and lysine 326. Residues cysteine 418, cysteine 421, cysteine 436, and cysteine 442 each coordinate Zn(2+). The disordered stretch occupies residues glutamine 556 to glutamate 588. Residues threonine 641–glycine 721 form the BRCT domain.

It belongs to the NAD-dependent DNA ligase family. LigA subfamily. Mg(2+) serves as cofactor. It depends on Mn(2+) as a cofactor.

It catalyses the reaction NAD(+) + (deoxyribonucleotide)n-3'-hydroxyl + 5'-phospho-(deoxyribonucleotide)m = (deoxyribonucleotide)n+m + AMP + beta-nicotinamide D-nucleotide.. In terms of biological role, DNA ligase that catalyzes the formation of phosphodiester linkages between 5'-phosphoryl and 3'-hydroxyl groups in double-stranded DNA using NAD as a coenzyme and as the energy source for the reaction. It is essential for DNA replication and repair of damaged DNA. This Novosphingobium aromaticivorans (strain ATCC 700278 / DSM 12444 / CCUG 56034 / CIP 105152 / NBRC 16084 / F199) protein is DNA ligase.